A 336-amino-acid polypeptide reads, in one-letter code: DNA-directed RNA polymerase subunit alpha (336 aa).

The alpha N-terminal domain (alpha-NTD) stretch occupies residues 1 to 232; sequence MIQKNWQELI…DQLSVFVNFD (232 aa). The segment at 248 to 336 is alpha C-terminal domain (alpha-CTD); the sequence is FNPALLKKVD…DLAKRYEDQY (89 aa).

Belongs to the RNA polymerase alpha chain family. As to quaternary structure, homodimer. The RNAP catalytic core consists of 2 alpha, 1 beta, 1 beta' and 1 omega subunit. When a sigma factor is associated with the core the holoenzyme is formed, which can initiate transcription.

The catalysed reaction is RNA(n) + a ribonucleoside 5'-triphosphate = RNA(n+1) + diphosphate. Its function is as follows. DNA-dependent RNA polymerase catalyzes the transcription of DNA into RNA using the four ribonucleoside triphosphates as substrates. This Sinorhizobium fredii (strain NBRC 101917 / NGR234) protein is DNA-directed RNA polymerase subunit alpha.